The sequence spans 302 residues: Phosphatidylglycerol--prolipoprotein diacylglyceryl transferase (302 aa).

7 helical membrane passes run 19-39, 67-87, 108-128, 143-163, 203-223, 232-252, and 264-284; these read FGPLALRWYALAYVAGILLGW, LVLWITLGIIVGGRLGYFVFY, IWEGGMSFHGGFLGVCAAIIL, LIAPVAPIGIFFGRIANFING, QLYEAALEGLVLFLILAFAIY, GALVATFLLGYGLARLALENV, and LGLTMGMMLSIPMILAGGWLL. Arg156 contacts a 1,2-diacyl-sn-glycero-3-phospho-(1'-sn-glycerol).

Belongs to the Lgt family.

It localises to the cell inner membrane. It carries out the reaction L-cysteinyl-[prolipoprotein] + a 1,2-diacyl-sn-glycero-3-phospho-(1'-sn-glycerol) = an S-1,2-diacyl-sn-glyceryl-L-cysteinyl-[prolipoprotein] + sn-glycerol 1-phosphate + H(+). It participates in protein modification; lipoprotein biosynthesis (diacylglyceryl transfer). Its function is as follows. Catalyzes the transfer of the diacylglyceryl group from phosphatidylglycerol to the sulfhydryl group of the N-terminal cysteine of a prolipoprotein, the first step in the formation of mature lipoproteins. This Caulobacter vibrioides (strain ATCC 19089 / CIP 103742 / CB 15) (Caulobacter crescentus) protein is Phosphatidylglycerol--prolipoprotein diacylglyceryl transferase.